Consider the following 258-residue polypeptide: Bidirectional sugar transporter SWEET7 (258 aa).

Residues 1–11 (MVFAHLNLLRK) lie on the Extracellular side of the membrane. Residues 12-32 (IVGIIGNFIALCLFLSPTPTF) form a helical membrane-spanning segment. The region spanning 12 to 100 (IVGIIGNFIA…IFFVYCGRQK (89 aa)) is the MtN3/slv 1 domain. At 33 to 46 (VRIVKKKSVEEYSP) the chain is on the cytoplasmic side. A helical membrane pass occupies residues 47 to 67 (IPYLATLINCLVWVLYGLPTV). Topologically, residues 68-73 (HPDSTL) are extracellular. The chain crosses the membrane as a helical span at residues 74-94 (VITINGTGILIEIVFLTIFFV). Residues 95–102 (YCGRQKQR) are Cytoplasmic-facing. Residues 103-123 (LIISAVIAAETAFIAILAVLV) traverse the membrane as a helical segment. Topologically, residues 124–134 (LTLQHTTEKRT) are extracellular. The chain crosses the membrane as a helical span at residues 135 to 155 (MSVGIVCCVFNVMMYASPLSV). The region spanning 136–221 (SVGIVCCVFN…LYGAYYKSTK (86 aa)) is the MtN3/slv 2 domain. Topologically, residues 156-166 (MKMVIKTKSVE) are cytoplasmic. The chain crosses the membrane as a helical span at residues 167-187 (FMPFWLSVAGFLNAGVWTIYA). The Extracellular portion of the chain corresponds to 188–193 (LMPFDP). A helical membrane pass occupies residues 194-214 (FMAIPNGIGCLFGLAQLILYG). Residues 215–258 (AYYKSTKRIMAERENQPGYVGLSSAIARTGSEKTANTNQEPNNV) are Cytoplasmic-facing.

The protein belongs to the SWEET sugar transporter family. As to quaternary structure, forms heterooligomers with SWEET8, SWEET11, SWEET13, SWEET16 and SWEET17.

It is found in the cell membrane. In terms of biological role, mediates both low-affinity uptake and efflux of sugar across the plasma membrane. This Arabidopsis thaliana (Mouse-ear cress) protein is Bidirectional sugar transporter SWEET7.